We begin with the raw amino-acid sequence, 695 residues long: Probable serine/threonine-protein kinase DDB_G0279405 (695 aa).

Disordered regions lie at residues 119–138 (IVAQPQPQPQPQPQPQPQPQ) and 149–192 (QIPT…KRHK). Residues 124–138 (QPQPQPQPQPQPQPQ) are compositionally biased toward pro residues. The segment covering 149–160 (QIPTTPPQQISQ) has biased composition (low complexity). Residues 161–173 (FNITGNKSPSSIG) are compositionally biased toward polar residues. The 262-residue stretch at 201-462 (YVFVRKLGKG…IAEIKSHKWT (262 aa)) folds into the Protein kinase domain. Residues 207–215 (LGKGTFGKV) and Lys230 contribute to the ATP site. Asp329 serves as the catalytic Proton acceptor. The segment at 491 to 580 (TDHTIKPSDN…NQNQNNNNNS (90 aa)) is disordered. A compositionally biased stretch (low complexity) spans 510-528 (LSSSSGGESSGIIGSSNES). The segment covering 529-541 (KSMYNNVNSKQKI) has biased composition (polar residues). Over residues 542-580 (QNQNQNQNQNQNQNQNQNQNQNHNQNQNQNQNQNNNNNS) the composition is skewed to low complexity.

The protein belongs to the protein kinase superfamily. Ser/Thr protein kinase family.

It catalyses the reaction L-seryl-[protein] + ATP = O-phospho-L-seryl-[protein] + ADP + H(+). The enzyme catalyses L-threonyl-[protein] + ATP = O-phospho-L-threonyl-[protein] + ADP + H(+). The chain is Probable serine/threonine-protein kinase DDB_G0279405 from Dictyostelium discoideum (Social amoeba).